Consider the following 99-residue polypeptide: uncharacterized protein (99 aa).

The helical transmembrane segment at 6–26 (LVCSIVFILFILFYDLKIGTI) threads the bilayer. Residues 48–95 (KTVKVKPGDTVMSIVGSAGSPDDIVKDFEALNPNVKANAIQAGTAYKF) form the LysM domain.

The protein localises to the secreted. Its subcellular location is the cell wall. It is found in the membrane. This is an uncharacterized protein from Bacillus subtilis (strain 168).